The chain runs to 230 residues: MKITYFGQSAFQIKTGKTTILIDPFLTGNKHTKVDPFDLNPEYILLTHAHQDHTGDSFDIARRTGATIITQTDYAQYINDILPEAKGCHAEGINFGGTFSADDFSVKLYPAWHTDARMVGNALVPVGVAAGMALTIEDKLIYDTGDTALFSDLKLVARKHPVDLALICIGGHFTMDADDALVAADFLQAKHVIPTHYNTFPSIQADPQKFVEQLPTGVGIIPDFDKEFDF.

It belongs to the UPF0173 family.

This chain is UPF0173 metal-dependent hydrolase OEOE_1287, found in Oenococcus oeni (strain ATCC BAA-331 / PSU-1).